The following is an 86-amino-acid chain: Large ribosomal subunit protein bL31B (86 aa).

It belongs to the bacterial ribosomal protein bL31 family. Type B subfamily. In terms of assembly, part of the 50S ribosomal subunit.

The chain is Large ribosomal subunit protein bL31B from Vibrio vulnificus (strain CMCP6).